A 328-amino-acid chain; its full sequence is MEIVWEVLFLLQANFIVCISAQQNSPKIHEGWWAYKEVVQGSFVPVPSFWGLVNSAWNLCSVGKRQSPVNIETSHMIFDPFLTPLRINTGGRKVSGTMYNTGRHVSLRLDKEHLVNISGGPMTYSHRLEEIRLHFGSEDSQGSEHLLNGQAFSGEVQLIHYNHELYTNVTEAAKSPNGLVVVSIFIKVSDSSNPFLNRMLNRDTITRITYKNDAYLLQGLNIEELYPETSSFITYDGSMTIPPCYETANWIIMNKPVYITRMQMHSLRLLSQNQPSQIFLSMSDNFRPVQSLNNRCIRTNINFSLQGKDCPNNRAQKLQYRVNEWLLK.

Residues 31–301 (GWWAYKEVVQ…LNNRCIRTNI (271 aa)) form the Alpha-carbonic anhydrase domain.

It belongs to the alpha-carbonic anhydrase family.

Does not have a catalytic activity. This is Carbonic anhydrase-related protein 10 (CA10) from Bos taurus (Bovine).